A 172-amino-acid polypeptide reads, in one-letter code: 3-hydroxydecanoyl-[acyl-carrier-protein] dehydratase (172 aa).

Residue H71 is part of the active site.

The protein belongs to the thioester dehydratase family. FabA subfamily. As to quaternary structure, homodimer.

It is found in the cytoplasm. It carries out the reaction a (3R)-hydroxyacyl-[ACP] = a (2E)-enoyl-[ACP] + H2O. The enzyme catalyses (3R)-hydroxydecanoyl-[ACP] = (2E)-decenoyl-[ACP] + H2O. It catalyses the reaction (2E)-decenoyl-[ACP] = (3Z)-decenoyl-[ACP]. It participates in lipid metabolism; fatty acid biosynthesis. Necessary for the introduction of cis unsaturation into fatty acids. Catalyzes the dehydration of (3R)-3-hydroxydecanoyl-ACP to E-(2)-decenoyl-ACP and then its isomerization to Z-(3)-decenoyl-ACP. Can catalyze the dehydratase reaction for beta-hydroxyacyl-ACPs with saturated chain lengths up to 16:0, being most active on intermediate chain length. The chain is 3-hydroxydecanoyl-[acyl-carrier-protein] dehydratase from Salmonella choleraesuis (strain SC-B67).